The chain runs to 318 residues: Protoheme IX farnesyltransferase (318 aa).

Helical transmembrane passes span 29 to 49, 51 to 71, 102 to 122, 123 to 143, 151 to 171, 179 to 199, 219 to 239, 241 to 261, and 280 to 300; these read IIPL…QGQV, PVLL…AQTI, LIFA…FANL, LAAS…THWL, IVIG…AVTG, LIFA…ALMI, ATVK…LLLV, PLHS…AVFI, and LFLY…IDSL.

It belongs to the UbiA prenyltransferase family. Protoheme IX farnesyltransferase subfamily.

It is found in the cell inner membrane. The catalysed reaction is heme b + (2E,6E)-farnesyl diphosphate + H2O = Fe(II)-heme o + diphosphate. It participates in porphyrin-containing compound metabolism; heme O biosynthesis; heme O from protoheme: step 1/1. Its function is as follows. Converts heme B (protoheme IX) to heme O by substitution of the vinyl group on carbon 2 of heme B porphyrin ring with a hydroxyethyl farnesyl side group. The chain is Protoheme IX farnesyltransferase from Trichormus variabilis (strain ATCC 29413 / PCC 7937) (Anabaena variabilis).